The following is a 103-amino-acid chain: Omega toxin Ap5 (103 aa).

Residues 1-22 form the signal peptide; it reads MNTIQVILFAVVLVLTVTVGQA. A propeptide spanning residues 23–57 is cleaved from the precursor; the sequence is DEDSAETSLLRKLEEAEASMFGQYLEESKNSREKR. Disulfide bonds link cysteine 58/cysteine 73, cysteine 65/cysteine 78, and cysteine 72/cysteine 93.

The protein belongs to the neurotoxin 14 (magi-1) family. 08 (Ltx-4) subfamily. Expressed by the venom duct.

It localises to the secreted. In terms of biological role, shows a weak inhibition on the voltage-gated calcium channel Cav2.1/CACNA1A and some voltage-gated sodium channels (with 1 uM toxin tested: 22.08% inhibition on Cav2.1/CACNA1A, 6.6% on Nav1.1/SCN1A, 4.2% on Nav1.5, and 16% on Nav1.7). Shows a weak inhibition on the voltage-gated calcium channel Cav2.1/CACNA1A (28.06% at 1 uM). This Acanthoscurria paulensis (Brazilian giant black tarantula spider) protein is Omega toxin Ap5.